The primary structure comprises 122 residues: UPF0382 membrane protein SAB0533 (122 aa).

The next 4 membrane-spanning stretches (helical) occupy residues 3–23 (LFIILGALNAMMAVGTGAFGA), 46–66 (MYHGLALLIIGVISGTTSINV), 69–89 (AGWLIFAGIIFFSGSLYILVL), and 98–118 (ITPIGGVLFIIGWIMLIIATF).

It belongs to the UPF0382 family.

It localises to the cell membrane. In Staphylococcus aureus (strain bovine RF122 / ET3-1), this protein is UPF0382 membrane protein SAB0533.